Consider the following 123-residue polypeptide: Small ribosomal subunit protein uS12 (123 aa).

D89 is modified (3-methylthioaspartic acid). The segment at 104–123 is disordered; sequence SVGVKDRKKSRSKYGAKRPK. The span at 109–123 shows a compositional bias: basic residues; it reads DRKKSRSKYGAKRPK.

This sequence belongs to the universal ribosomal protein uS12 family. Part of the 30S ribosomal subunit. Contacts proteins S8 and S17. May interact with IF1 in the 30S initiation complex.

Its function is as follows. With S4 and S5 plays an important role in translational accuracy. Functionally, interacts with and stabilizes bases of the 16S rRNA that are involved in tRNA selection in the A site and with the mRNA backbone. Located at the interface of the 30S and 50S subunits, it traverses the body of the 30S subunit contacting proteins on the other side and probably holding the rRNA structure together. The combined cluster of proteins S8, S12 and S17 appears to hold together the shoulder and platform of the 30S subunit. The chain is Small ribosomal subunit protein uS12 from Geotalea daltonii (strain DSM 22248 / JCM 15807 / FRC-32) (Geobacter daltonii).